The sequence spans 798 residues: uncharacterized protein (798 aa).

A signal peptide spans 1-22; that stretch reads MKFKYGAIVFSGLLGVSAILAA. Cysteine 23 carries the N-palmitoyl cysteine lipid modification. Cysteine 23 carries S-diacylglycerol cysteine lipidation. The segment covering 178 to 192 has biased composition (basic and acidic residues); that stretch reads SKGAQKDNKSAEVQR. Disordered regions lie at residues 178–204, 226–260, 443–463, and 478–515; these read SKGA…TQPL, NGKK…ATSD, EVNA…QSDQ, and SDIK…TPKK. A compositionally biased stretch (polar residues) spans 193-204; the sequence is KSTGQKTVTQPL. Residues 226 to 235 are compositionally biased toward basic and acidic residues; sequence NGKKKEEKKS. Positions 478–495 are enriched in basic and acidic residues; that stretch reads SDIKVKPKTQAESKKSSD. Residues 496–515 show a composition bias toward polar residues; it reads SKQTANTGKGSNSKQQTPKK.

This sequence belongs to the MG185/MG260 family.

The protein localises to the cell membrane. This is an uncharacterized protein from Mycoplasma pneumoniae (strain ATCC 29342 / M129 / Subtype 1) (Mycoplasmoides pneumoniae).